Here is a 154-residue protein sequence, read N- to C-terminus: Myoglobin (154 aa).

The 147-residue stretch at 2 to 148 (ELSDQEWKHV…FRNDMASKYK (147 aa)) folds into the Globin domain. Position 65 (His65) interacts with nitrite. His65 is an O2 binding site. Heme b is bound at residue His94.

The protein belongs to the globin family. As to quaternary structure, monomeric.

It localises to the cytoplasm. Its subcellular location is the sarcoplasm. It catalyses the reaction Fe(III)-heme b-[protein] + nitric oxide + H2O = Fe(II)-heme b-[protein] + nitrite + 2 H(+). The catalysed reaction is H2O2 + AH2 = A + 2 H2O. In terms of biological role, monomeric heme protein which primary function is to store oxygen and facilitate its diffusion within muscle tissues. Reversibly binds oxygen through a pentacoordinated heme iron and enables its timely and efficient release as needed during periods of heightened demand. Depending on the oxidative conditions of tissues and cells, and in addition to its ability to bind oxygen, it also has a nitrite reductase activity whereby it regulates the production of bioactive nitric oxide. Under stress conditions, like hypoxia and anoxia, it also protects cells against reactive oxygen species thanks to its pseudoperoxidase activity. This chain is Myoglobin (MB), found in Alligator mississippiensis (American alligator).